The sequence spans 419 residues: MEKFVIEGKQRLTGRVKISGAKNAALPILAGALLTGGTVRLTEVPELTDIYTMLEVLKALGAKVTFSEGEVVLHTPEITSAEAPYEQVRKMRASFLVMGPLLARTGRARISLPGGCAIGARPIDLHLKGFEALGAKIEMGHGFIEATAPRLKGTTVYLDFPSVGATENIMMAAVLAEGQTIIENAAEEPEIVDLANFLNNMGAKIKGAGTKVIRITGVKDLDGVNHTVIPDRIEAGTFMIGAVATQGEVIVENVITDHLTPLIAKLIEAGAEVIEDEDQNALLVRSNGKLKPLDIKTLPYPGFPTDLQAQMMALLATVPGISVVTETVFENRFMHVTELNRMGAKIRIEGRSAFIEGVESLTGARVKATDLRAGAALVIAGLVADGVTEVGHIFHIDRGYERFEEKLRGLGAKIERVSD.

22–23 (KN) contributes to the phosphoenolpyruvate binding site. Residue R92 participates in UDP-N-acetyl-alpha-D-glucosamine binding. Catalysis depends on C116, which acts as the Proton donor. The residue at position 116 (C116) is a 2-(S-cysteinyl)pyruvic acid O-phosphothioketal. UDP-N-acetyl-alpha-D-glucosamine contacts are provided by residues 121-125 (RPIDL), D306, and V328.

It belongs to the EPSP synthase family. MurA subfamily.

The protein resides in the cytoplasm. The enzyme catalyses phosphoenolpyruvate + UDP-N-acetyl-alpha-D-glucosamine = UDP-N-acetyl-3-O-(1-carboxyvinyl)-alpha-D-glucosamine + phosphate. It functions in the pathway cell wall biogenesis; peptidoglycan biosynthesis. Its function is as follows. Cell wall formation. Adds enolpyruvyl to UDP-N-acetylglucosamine. The sequence is that of UDP-N-acetylglucosamine 1-carboxyvinyltransferase 2 from Carboxydothermus hydrogenoformans (strain ATCC BAA-161 / DSM 6008 / Z-2901).